Reading from the N-terminus, the 867-residue chain is Nuclear body protein SP140 (867 aa).

In terms of domain architecture, HSR spans Val22–Tyr138. Disordered stretches follow at residues Thr260–Gln341, Thr365–Leu432, and Ile486–Asp580. The span at Lys268 to Asp301 shows a compositional bias: basic and acidic residues. Composition is skewed to acidic residues over residues Glu323–Gln341 and Glu384–Asp397. A compositionally biased stretch (low complexity) spans Ala404 to Ser416. 2 stretches are compositionally biased toward basic residues: residues Lys494–Met512 and Gln567–Lys577. Positions Pro495–Arg514 match the Nuclear localization signal motif. One can recognise an SAND domain in the interval Asp580–Pro661. Residues Leu690–Lys736 form a PHD-type zinc finger. Thr726 bears the Phosphothreonine mark. The 104-residue stretch at Gln754–Val857 folds into the Bromo domain.

As to quaternary structure, interacts with PIN1. Phosphorylation at Thr-726 promotes binding of PIN1 and subsequent isomerization of Pro-727. In terms of tissue distribution, high levels in spleen and peripheral blood leukocytes, much lower levels in tonsils, thymus, prostate, ovary, small intestine, and colon. Very low levels in heart, brain, placenta, lung, liver, skeletal muscle, kidney, and pancreas. Not detected in brain, liver and muscle.

It localises to the nucleus. The protein resides in the PML body. The protein localises to the cytoplasm. Functionally, component of the nuclear body, also known as nuclear domain 10, PML oncogenic domain, and KR body. May be involved in the pathogenesis of acute promyelocytic leukemia and viral infection. May play a role in chromatin-mediated regulation of gene expression although it does not bind to histone H3 tails. This chain is Nuclear body protein SP140, found in Homo sapiens (Human).